Reading from the N-terminus, the 442-residue chain is Adenylosuccinate synthetase (442 aa).

Residues 25–31, 53–55, and lysine 62 each bind GTP; these read GDEGKGK and GHT. Aspartate 26 serves as the catalytic Proton acceptor. Residues aspartate 26 and glycine 53 each coordinate Mg(2+). IMP is bound by residues 26–29 and 51–54; these read DEGK and NAGH. The active-site Proton donor is the histidine 54. Positions 141, 155, 232, and 247 each coordinate IMP. A GTP-binding site is contributed by threonine 307. A substrate-binding site is contributed by 307 to 313; the sequence is TTTKRPR. IMP is bound at residue arginine 311. Residues arginine 313, 339-341, and 425-427 contribute to the GTP site; these read KLD and GVG.

Belongs to the adenylosuccinate synthetase family. As to quaternary structure, homodimer. Mg(2+) serves as cofactor.

The protein localises to the cytoplasm. It catalyses the reaction IMP + L-aspartate + GTP = N(6)-(1,2-dicarboxyethyl)-AMP + GDP + phosphate + 2 H(+). The protein operates within purine metabolism; AMP biosynthesis via de novo pathway; AMP from IMP: step 1/2. Plays an important role in the salvage pathway for purine nucleotide biosynthesis. Catalyzes the first committed step in the biosynthesis of AMP from IMP. The protein is Adenylosuccinate synthetase (Adss) of Plasmodium falciparum (isolate 3D7).